The following is a 229-amino-acid chain: Urease accessory protein UreF (229 aa).

It belongs to the UreF family. As to quaternary structure, ureD, UreF and UreG form a complex that acts as a GTP-hydrolysis-dependent molecular chaperone, activating the urease apoprotein by helping to assemble the nickel containing metallocenter of UreC. The UreE protein probably delivers the nickel.

It is found in the cytoplasm. In terms of biological role, required for maturation of urease via the functional incorporation of the urease nickel metallocenter. In Staphylococcus aureus (strain bovine RF122 / ET3-1), this protein is Urease accessory protein UreF.